Reading from the N-terminus, the 164-residue chain is Small ribosomal subunit protein uS5 (164 aa).

An S5 DRBM domain is found at 11–74 (LKEKLISVNR…EKARKNMIII (64 aa)).

Belongs to the universal ribosomal protein uS5 family. In terms of assembly, part of the 30S ribosomal subunit. Contacts proteins S4 and S8.

In terms of biological role, with S4 and S12 plays an important role in translational accuracy. Located at the back of the 30S subunit body where it stabilizes the conformation of the head with respect to the body. This chain is Small ribosomal subunit protein uS5, found in Buchnera aphidicola subsp. Cinara cedri (strain Cc).